A 206-amino-acid chain; its full sequence is Large ribosomal subunit protein uL4 (206 aa).

The disordered stretch occupies residues 47–76 (GTQSAKTRAEVSGGGIKPWRQKGTGRARQG).

It belongs to the universal ribosomal protein uL4 family. Part of the 50S ribosomal subunit.

One of the primary rRNA binding proteins, this protein initially binds near the 5'-end of the 23S rRNA. It is important during the early stages of 50S assembly. It makes multiple contacts with different domains of the 23S rRNA in the assembled 50S subunit and ribosome. Its function is as follows. Forms part of the polypeptide exit tunnel. The protein is Large ribosomal subunit protein uL4 of Clostridium botulinum (strain Okra / Type B1).